A 208-amino-acid polypeptide reads, in one-letter code: Small ribosomal subunit protein uS4 (208 aa).

Residues 98–161 enclose the S4 RNA-binding domain; sequence QRLDNVVYRM…KNNPQIVRAI (64 aa).

The protein belongs to the universal ribosomal protein uS4 family. As to quaternary structure, part of the 30S ribosomal subunit. Contacts protein S5. The interaction surface between S4 and S5 is involved in control of translational fidelity.

Functionally, one of the primary rRNA binding proteins, it binds directly to 16S rRNA where it nucleates assembly of the body of the 30S subunit. With S5 and S12 plays an important role in translational accuracy. In Campylobacter concisus (strain 13826), this protein is Small ribosomal subunit protein uS4.